A 248-amino-acid polypeptide reads, in one-letter code: Trypsin II-P29 (248 aa).

The signal sequence occupies residues 1–16; sequence MKFLFLILSCLGAAVA. Residues 17–25 constitute a propeptide, activation peptide; sequence FPGGADDDK. In terms of domain architecture, Peptidase S1 spans 26–246; the sequence is IVGGYTCPEH…YVDWIQETIA (221 aa). 6 disulfides stabilise this stretch: C32/C162, C50/C66, C134/C235, C141/C208, C173/C187, and C198/C222. Residue H65 is the Charge relay system of the active site. The Ca(2+) site is built by E77, N79, V82, and E87. Residue D109 is the Charge relay system of the active site. The active-site Charge relay system is the S202.

It belongs to the peptidase S1 family. Ca(2+) serves as cofactor. In terms of tissue distribution, high levels are seen in the pancreas while lower levels are found in the liver, spleen and thymus.

Its subcellular location is the secreted. The protein localises to the extracellular space. It catalyses the reaction Preferential cleavage: Arg-|-Xaa, Lys-|-Xaa.. This chain is Trypsin II-P29, found in Gallus gallus (Chicken).